Reading from the N-terminus, the 681-residue chain is Pentatricopeptide repeat-containing protein At2g22410, mitochondrial (681 aa).

Residues 1-32 (MNISKAKLLLLPPPLTPKLNRSLYSHSQRRTR) constitute a mitochondrion transit peptide. 13 PPR repeats span residues 117 to 151 (NIFS…GCCE), 155 to 189 (DHFT…RLEL), 190 to 220 (VSHV…SPVR), 221 to 255 (DLVS…GVKP), 256 to 290 (DDVT…GLRM), 291 to 321 (TIPL…LEKR), 322 to 356 (TIVS…DVVL), 357 to 387 (WNAM…NTKP), 388 to 422 (DEIT…SLSL), 423 to 453 (NVAL…IQTR), 454 to 488 (NSLT…GIAP), 489 to 519 (DEIT…MKSR), and 525 to 555 (QLKH…MPME). The type E motif stretch occupies residues 560 to 635 (VWGALLFGCR…IPGCSSIEVN (76 aa)). Residues 636–666 (GIVCEFIVRDKSRPESEKIYDRLHCLGRHMR) are type E(+) motif.

It belongs to the PPR family. PCMP-E subfamily.

It is found in the mitochondrion. The chain is Pentatricopeptide repeat-containing protein At2g22410, mitochondrial (PCMP-E28) from Arabidopsis thaliana (Mouse-ear cress).